A 426-amino-acid chain; its full sequence is Glucose-6-phosphate isomerase (426 aa).

The Proton donor role is filled by glutamate 276. Residues histidine 297 and lysine 413 contribute to the active site.

It belongs to the GPI family.

It localises to the cytoplasm. The enzyme catalyses alpha-D-glucose 6-phosphate = beta-D-fructose 6-phosphate. The protein operates within carbohydrate biosynthesis; gluconeogenesis. It participates in carbohydrate degradation; glycolysis; D-glyceraldehyde 3-phosphate and glycerone phosphate from D-glucose: step 2/4. Catalyzes the reversible isomerization of glucose-6-phosphate to fructose-6-phosphate. This Mesoplasma florum (strain ATCC 33453 / NBRC 100688 / NCTC 11704 / L1) (Acholeplasma florum) protein is Glucose-6-phosphate isomerase.